A 398-amino-acid chain; its full sequence is Isochorismate synthase DhbC (398 aa).

Serine 271 bears the Phosphoserine mark.

The protein belongs to the isochorismate synthase family.

It catalyses the reaction chorismate = isochorismate. The protein operates within siderophore biosynthesis; bacillibactin biosynthesis. The sequence is that of Isochorismate synthase DhbC (dhbC) from Bacillus subtilis (strain 168).